The sequence spans 1221 residues: 2-oxoglutarate dehydrogenase E1/E2 component (1221 aa).

Residues 2–40 (SSASTFGQNAWLVDEMFQQFQKDPKSVDKEWRELFEAQG) are 2-oxoglutarate dehydrogenase E1, N-terminal part. The disordered stretch occupies residues 22 to 107 (QKDPKSVDKE…KLPEPGQTPI (86 aa)). The segment covering 23–36 (KDPKSVDKEWRELF) has biased composition (basic and acidic residues). The segment covering 41–52 (GPNTTPATTEAQ) has biased composition (polar residues). The linker stretch occupies residues 41 to 89 (GPNTTPATTEAQPSAPKESAKPAPKAAPAAKAAPRVETKPADKTAPKAK). The span at 53–73 (PSAPKESAKPAPKAAPAAKAA) shows a compositional bias: low complexity. Positions 74–90 (PRVETKPADKTAPKAKE) are enriched in basic and acidic residues. The tract at residues 90–337 (ESSVPQQPKL…LRTMSRLLTD (248 aa)) is succinyltransferase E2. Histidine 316 functions as the Proton acceptor; for succinyltransferase activity in the catalytic mechanism. A 2-oxoglutarate dehydrogenase E1, C-terminal part region spans residues 338–1221 (DSFWDEIFDA…KQLIDEAFEA (884 aa)). A thiamine diphosphate-binding site is contributed by arginine 544. Positions 583 and 608 each coordinate 2-oxoglutarate. Thiamine diphosphate contacts are provided by serine 608, leucine 610, aspartate 645, alanine 646, alanine 647, and asparagine 678. Residue aspartate 645 participates in Mg(2+) binding. Mg(2+) is bound by residues asparagine 678 and isoleucine 680. Histidine 1017 lines the 2-oxoglutarate pocket. Residues threonine 1035, arginine 1051, lysine 1087, serine 1090, and arginine 1144 each coordinate acetyl-CoA.

The protein in the N-terminal section; belongs to the alpha-ketoglutarate dehydrogenase family. This sequence in the C-terminal section; belongs to the 2-oxoacid dehydrogenase family. Homodimer. Part of an unusual ODH/PDH supercomplex, consisting of AceE (E1), AceF (E2), and Lpd (E3) together with OdhA (E1+E2). Interacts with the FHA domain of unphosphorylated OdhI via its C-terminal dehydrogenase domain. Mg(2+) is required as a cofactor. The cofactor is thiamine diphosphate.

The catalysed reaction is N(6)-[(R)-lipoyl]-L-lysyl-[protein] + 2-oxoglutarate + H(+) = N(6)-[(R)-S(8)-succinyldihydrolipoyl]-L-lysyl-[protein] + CO2. The enzyme catalyses N(6)-[(R)-dihydrolipoyl]-L-lysyl-[protein] + succinyl-CoA = N(6)-[(R)-S(8)-succinyldihydrolipoyl]-L-lysyl-[protein] + CoA. It functions in the pathway carbohydrate metabolism; tricarboxylic acid cycle; succinyl-CoA from 2-oxoglutarate (dehydrogenase route): step 1/1. Inhibited by unphosphorylated OdhI, but not by phosphorylated OdhI. In terms of biological role, catalyzes the E1 and E2 reactions as part of 2-oxoglutarate dehydrogenase (ODH) activity, to convert 2-oxoglutarate to succinyl-CoA and CO(2). OdhA has reductase activity with 2-oxoglutarate but does not react with pyruvate, and also displays transsuccinylase but no transacetylase activity. Since OdhA is not lipoylated, the succinyltransferase activity of its E2 domain is dependent on lipoyl residues of the acetyltransferase AceF. The protein is 2-oxoglutarate dehydrogenase E1/E2 component of Corynebacterium glutamicum (strain ATCC 13032 / DSM 20300 / JCM 1318 / BCRC 11384 / CCUG 27702 / LMG 3730 / NBRC 12168 / NCIMB 10025 / NRRL B-2784 / 534).